The primary structure comprises 782 residues: MMSNLVEPSWRLLAASGGDTVKLFDVSADSGDPCVLSYTPSPGCAVNSVKWNHTNLVVASTGEDKKISLWRKNGQSLGTVPVTGKDGGDSAEECLSAISFSKKGSRYICSGGTGQIVKIWDLQRKLCIKKLKGHTSTITGVMYNCKDEHLASVSVGGDLIVHNLASGARATELKDPNGQVLRLLDYSRSSRHLLVTAGDDGTVHLWDTTGRSPKMSWLKQHSAPTAGVCFSPSNEKIIASVGMDKKLYTYDSGSRRSSSCIAYEAPFSSLAFGDNGYILVAGTSNGRVVFYDIRGKPQPVTVLHAFSNSEDVTSLSWQTSKPVIVNEKNYTSEMALLGSTVEDSVVIPDPLPSTTPSASQSAMAPGSRGVSASTVNASSVEQTPNRNHLWPSGPLGRLHALRANDSYNDDMGVFSPIIDVSSVEKWADSEGYNNKDHLVVDNKPSSLLFPSSSKGYSFGDNGSKEHPIFDWKPSSTSKQDDPRAAFSSFGSITPTASSKSEDSALTPPEAWGGDKFSEKFNQLANEKFSDKFSHLHAPSRLAVSSTGASTSGSMFSSSRDFPLSHGQTNFANASLEFPRIRDFSSTFETSSTQTDNNLPSSPLFTKGITAPGNIDSLRLSPNFTRRFSTYAERISTTSSFSDGASLSLGGSPKIKKTGSETREEVLNHLLARPETVVATEAGAMPLMNQGGLKQSQTDQQQVMGSSNFTLQLFQRTLEGTLDSFQNSIHDDVRNLHIEILRQFHMHEMEMSKVLSSILENQAEQMKELKLLRKENQELRQRL.

WD repeat units follow at residues 1-34 (MMSNLVEPSWRLLAASGGDTVKLFDVSADSGDPC), 41-80 (SPGCAVNSVKWNHTNLVVASTGEDKKISLWRKNGQSLGTV), 90-130 (SAEE…CIKK), 133-172 (GHTSTITGVMYNCKDEHLASVSVGGDLIVHNLASGARATE), 176-216 (PNGQ…PKMS), 220-260 (QHSA…SSSC), 262-301 (AYEAPFSSLAFGDNGYILVAGTSNGRVVFYDIRGKPQPVT), and 307-358 (SNSE…TPSA). 2 disordered regions span residues 350-393 (PLPS…WPSG) and 467-512 (PIFD…EAWG). 3 stretches are compositionally biased toward polar residues: residues 352–362 (PSTTPSASQSA), 370–386 (VSASTVNASSVEQTPNR), and 488–498 (SFGSITPTASS). Residues 753 to 782 (VLSSILENQAEQMKELKLLRKENQELRQRL) adopt a coiled-coil conformation.

Expressed in root meristematic cells.

The protein localises to the nucleus envelope. Its subcellular location is the chromosome. The protein resides in the centromere. It is found in the kinetochore. It localises to the cytoplasm. The protein localises to the cytoskeleton. Its subcellular location is the phragmoplast. The protein resides in the microtubule organizing center. Its function is as follows. Regulates microtubules organization in a centrosome-independent manner. Required for the spindle to be positioned correctly and for the function of gamma-tubulin in organizing phragmoplast microtubules. Component of active gamma-tubulin ring complexes (gamma-TuRCs) associated with cortical microtubules in interphase cells. Mediates gamma-TuRC recruitment to the nucleation sites and is important for determining the ratio of branched to parallel nucleation. May mediate the localization of GCP2 and GCP3 to the nuclear envelope. The sequence is that of Protein NEDD1 from Arabidopsis thaliana (Mouse-ear cress).